The primary structure comprises 128 residues: Prefoldin subunit 1 (128 aa).

2 coiled-coil regions span residues 17–37 and 81–115; these read MIELTGKLKQVQNQMRNKEGD and LKDSEAAVASLQTSKEYLEKQVAEVENNLRELLQQ.

It belongs to the prefoldin subunit beta family. In terms of assembly, heterohexamer of two PFD-alpha type and four PFD-beta type subunits forming prefoldin co-chaperone complex. Interacts with LSM8, a specific subunit of the LSM2-8 complex, which is a core component of the spliceosome.

It localises to the cytoplasm. The protein localises to the nucleus. Its function is as follows. Binds specifically to cytosolic chaperonin (c-CPN) and transfers target proteins to it. Binds to nascent polypeptide chain and promotes folding in an environment in which there are many competing pathways for nonnative proteins. Together with other chaperonins, contribute to the regulation of gene expression by modulating the spliceosome function on pre-mRNA splicing post-transcriptionally by acting as a co-chaperone of Hsp90 to control levels of LSM8. Required for microtubules (MTs) organization and dynamicity. Involved in the process leading to microtubules dissociation in response to gibberellic acid (GA) probably due to the DELLA proteins-mediated translocation of the prefoldin co-chaperone complex from the cytoplasm to the nucleus. The chain is Prefoldin subunit 1 from Arabidopsis thaliana (Mouse-ear cress).